Consider the following 382-residue polypeptide: Lipoyl synthase, mitochondrial (382 aa).

The transit peptide at M1 to L30 directs the protein to the mitochondrion. Residues S25–D34 show a composition bias toward polar residues. Residues S25–T46 are disordered. Residues C112, C117, C123, C143, C147, C150, and S359 each coordinate [4Fe-4S] cluster. Positions E128–R348 constitute a Radical SAM core domain.

Belongs to the radical SAM superfamily. Lipoyl synthase family. [4Fe-4S] cluster serves as cofactor.

The protein localises to the mitochondrion. It catalyses the reaction [[Fe-S] cluster scaffold protein carrying a second [4Fe-4S](2+) cluster] + N(6)-octanoyl-L-lysyl-[protein] + 2 oxidized [2Fe-2S]-[ferredoxin] + 2 S-adenosyl-L-methionine + 4 H(+) = [[Fe-S] cluster scaffold protein] + N(6)-[(R)-dihydrolipoyl]-L-lysyl-[protein] + 4 Fe(3+) + 2 hydrogen sulfide + 2 5'-deoxyadenosine + 2 L-methionine + 2 reduced [2Fe-2S]-[ferredoxin]. It participates in protein modification; protein lipoylation via endogenous pathway; protein N(6)-(lipoyl)lysine from octanoyl-[acyl-carrier-protein]: step 2/2. Functionally, catalyzes the radical-mediated insertion of two sulfur atoms into the C-6 and C-8 positions of the octanoyl moiety bound to the lipoyl domains of lipoate-dependent enzymes, thereby converting the octanoylated domains into lipoylated derivatives. The sequence is that of Lipoyl synthase, mitochondrial from Oryza sativa subsp. japonica (Rice).